We begin with the raw amino-acid sequence, 44 residues long: Phycoerythrin alpha-1 chain (44 aa).

Residues 1 to 44 (AMDKSAKAPQITIFDHRGCSRAPKSETGGTATKDDQMMVKVSQV) are disordered. K4 bears the 5-hydroxylysine mark. 15,16-dihydrobiliverdin is bound by residues C19 and R21. The segment at 24–26 (KSE) is 15,16-dihydrobiliverdin chromophore. K40 contacts 15,16-dihydrobiliverdin.

It belongs to the phycoerythrin family. In terms of assembly, heterotetramer of 2 different alpha chains and 2 identical beta chains. The subunit composition could comprise of any combination of 2 out of 4 different alpha units with an invariant beta unit. Contains one covalently linked 15,16-dihydrobiliverdin chromophore.

The protein resides in the plastid. It is found in the chloroplast thylakoid membrane. Its function is as follows. Light-harvesting photosynthetic tetrapyrrole chromophore-protein from the phycobiliprotein complex. The sequence is that of Phycoerythrin alpha-1 chain (cpeA1) from Rhodomonas sp. (strain CS 24) (Chroomonas sp. (strain CS24)).